The primary structure comprises 864 residues: Disintegrin and metalloproteinase domain-containing protein 15 (864 aa).

An N-terminal signal peptide occupies residues 1-17; that stretch reads MRLALLWALGLLGAGSP. Residues 18–45 form a disordered region; sequence RPSPPLPNIGGTEEEQQASPERTLSGSM. Positions 18–207 are excised as a propeptide; that stretch reads RPSPPLPNIG…EQHHAHRLKR (190 aa). Residues 34–45 are compositionally biased toward polar residues; the sequence is QASPERTLSGSM. The Cysteine switch motif lies at 177 to 184; sequence HTCAPSWH. A Zn(2+)-binding site is contributed by Cys-179. Over 208–696 the chain is Extracellular; the sequence is DVVTETKIVE…TQLKATSSLT (489 aa). A Peptidase M12B domain is found at 214–415; the sequence is KIVELVIVAD…GMGSCLFERQ (202 aa). Residue Asn-238 is glycosylated (N-linked (GlcNAc...) asparagine). 4 disulfide bridges follow: Cys-324-Cys-410, Cys-366-Cys-394, Cys-368-Cys-377, and Cys-481-Cys-501. His-349 is a binding site for Zn(2+). The active site involves Glu-350. Positions 353 and 359 each coordinate Zn(2+). 2 N-linked (GlcNAc...) asparagine glycosylation sites follow: Asn-390 and Asn-393. A Disintegrin domain is found at 422–509; it reads SSLCGNMFVD…QCPSDIRLGD (88 aa). Asn-607 and Asn-612 each carry an N-linked (GlcNAc...) asparagine glycan. Disulfide bonds link Cys-658-Cys-668, Cys-662-Cys-674, and Cys-676-Cys-685. Residues 658-686 form the EGF-like domain; the sequence is CRRKCHGHGVCDSSGHCRCEEGWAPPDCM. A helical transmembrane segment spans residues 697 to 717; it reads TGLLLSLLLLLVLVLLGASYW. Tyr-716 and Tyr-736 each carry phosphotyrosine; by HCK and LCK. At 718–864 the chain is on the cytoplasmic side; sequence HRARLHQRLC…PPPAASSLYL (147 aa). The disordered stretch occupies residues 736-864; it reads YRAPQSCPPE…PPPAASSLYL (129 aa). Pro residues predominate over residues 741-750; the sequence is SCPPERPGPP. Residues 752–762 show a composition bias toward polar residues; sequence RAQQMTGTKQA. Pro residues-rich tracts occupy residues 768 to 780 and 814 to 825; these read PVPP…PNPV and TKPPPPRKPLPA. 2 consecutive short sequence motifs (SH3-binding) follow at residues 816 to 822 and 851 to 857; these read PPPPRKP and RPAPPPP.

As to quaternary structure, interacts specifically with Src family protein-tyrosine kinases (PTKs). Interacts with ITAGV-ITGB3 (vitronectin receptor). Interacts with SH3GL2 and SNX9; this interaction occurs preferentially with ADAM15 precursor, rather than the processed form, suggesting it occurs in a secretory pathway compartment prior to the medial Golgi. Interacts with ITAG9-ITGB1. Interacts with SH3PXD2A. Interacts with ITAGV-ITGB1. Interacts with GRB2, HCK, ITSN1, ITSN2, LYN, MAPK1, MAPK3, NCF1, NCK1, nephrocystin, PTK6, SNX33, LCK and SRC. It depends on Zn(2+) as a cofactor. In terms of processing, the precursor is cleaved by a furin endopeptidase. An additional membrane proximal site of cleavage affects a small percentage of the proteins and results in disulfide-linked fragments. The prodomain is apparently cleaved in several positions that are N-terminal of the furin cleavage site. Post-translationally, may be partially sialylated. Phosphorylation increases association with PTKs. In terms of tissue distribution, expressed moderately in pericytes of retina. Expressed in testis and in spermatozoa from the caput, corpus, and cauda epididymis, as well as in non-capacitated and acrosome-reacted sperm (at protein level). Highly expressed in heart, brain, lung, and kidney. Expressed at lower levels in spleen, liver, testis and muscle.

Its subcellular location is the endomembrane system. The protein resides in the cell junction. It is found in the adherens junction. It localises to the cell projection. The protein localises to the cilium. Its subcellular location is the flagellum. The protein resides in the cytoplasmic vesicle. It is found in the secretory vesicle. It localises to the acrosome. In terms of biological role, active metalloproteinase with gelatinolytic and collagenolytic activity. Plays a role in the wound healing process. Mediates both heterotypic intraepithelial cell/T-cell interactions and homotypic T-cell aggregation. Inhibits beta-1 integrin-mediated cell adhesion and migration of airway smooth muscle cells. Suppresses cell motility on or towards fibronectin possibly by driving alpha-v/beta-1 integrin (ITAGV-ITGB1) cell surface expression via ERK1/2 inactivation. Cleaves E-cadherin in response to growth factor deprivation. Plays a role in glomerular cell migration. Plays a role in pathological neovascularization. May play a role in cartilage remodeling. May be proteolytically processed, during sperm epididymal maturation and the acrosome reaction. May play a role in sperm-egg binding through its disintegrin domain. Interactions with egg membrane could be mediated via binding between the disintegrin-like domain to one or more integrin receptors on the egg. The protein is Disintegrin and metalloproteinase domain-containing protein 15 (Adam15) of Mus musculus (Mouse).